A 292-amino-acid polypeptide reads, in one-letter code: Protein SETSIP (292 aa).

Residues 1 to 11 (MAPKRQSPLPL) are compositionally biased toward low complexity. Disordered regions lie at residues 1–43 (MAPK…EQQE) and 158–292 (LNES…GEDD). Residues 35–78 (KKGEKEQQEAIEHIDEVQNEIDRLNEQDSEEILKVEQKYNKLRQ) adopt a coiled-coil conformation. Positions 237–292 (DMDDEEGGEDDDDDDDDGDEGEEELEDIDEGDEDEGEEDEDDDEGEEGEEDEGEDD) are enriched in acidic residues.

The protein belongs to the nucleosome assembly protein (NAP) family. As to expression, expressed in endothelial cell (EC) and protein-induced pluripotent stem (PiPS) endothelial cell (EC) (at protein level).

The protein resides in the cytoplasm. Its subcellular location is the nucleus. In terms of biological role, plays a role as a transcriptional activator involved in the early stage of somatic cell reprogramming. Promotes the differentiation of protein-induced pluripotent stem (PiPS) cells into endothelial cells and the formation of vascular-like tubes (in vitro). Involved in the transcription induction of vascular endothelial-cadherin (VE-cadherin) expression. Associates to the VE-cadherin gene promoter. The chain is Protein SETSIP (SETSIP) from Homo sapiens (Human).